The primary structure comprises 340 residues: Delta(1)-pyrroline-2-carboxylate reductase 2 (340 aa).

Serine 50 (charge relay system) is an active-site residue. The active-site Proton donor is histidine 51. Arginine 55 contacts substrate. 123 to 127 contacts NADP(+); that stretch reads HFSAL. Threonine 163 is a substrate binding site. 181–183 serves as a coordination point for NADP(+); the sequence is DFA. 189 to 190 lines the substrate pocket; sequence RG. Aspartate 191 functions as the Charge relay system in the catalytic mechanism. NADP(+) is bound by residues 232–233 and 307–313; these read HK and RLPSQRR.

This sequence belongs to the LDH2/MDH2 oxidoreductase family. As to quaternary structure, homodimer.

The enzyme catalyses L-proline + NAD(+) = 1-pyrroline-2-carboxylate + NADH + H(+). It carries out the reaction L-proline + NADP(+) = 1-pyrroline-2-carboxylate + NADPH + H(+). Functionally, catalyzes the reduction of Delta(1)-pyrroline-2-carboxylate (Pyr2C) to L-proline, using NADPH as the electron donor. May be involved in a degradation pathway that converts trans-3-hydroxy-L-proline (t3LHyp) to L-proline. The chain is Delta(1)-pyrroline-2-carboxylate reductase 2 from Burkholderia multivorans (strain ATCC 17616 / 249).